A 227-amino-acid chain; its full sequence is Orotidine 5'-phosphate decarboxylase (227 aa).

Substrate contacts are provided by residues Asp8, Lys30, 57 to 66, Thr116, Arg177, Gln186, Gly206, and Arg207; that span reads DLKFHDIPNT. The active-site Proton donor is the Lys59.

This sequence belongs to the OMP decarboxylase family. Type 1 subfamily. As to quaternary structure, homodimer.

It carries out the reaction orotidine 5'-phosphate + H(+) = UMP + CO2. Its pathway is pyrimidine metabolism; UMP biosynthesis via de novo pathway; UMP from orotate: step 2/2. Functionally, catalyzes the decarboxylation of orotidine 5'-monophosphate (OMP) to uridine 5'-monophosphate (UMP). The chain is Orotidine 5'-phosphate decarboxylase from Acinetobacter baumannii (strain AB307-0294).